The following is a 2094-amino-acid chain: MVKIGSDTLAPKQLVLENKYIAACLSKPANFALSFLAQGASLKPSVVARAAINGVIACDTTTFQLLAMDGTPLSFAAAAVVVRQFQLAHNRFVKIGLRQFYKECTRRCNAFNLQKAARQSRERRAACKRILASLDADLPCSRSSRRAIVTAHYAGVATAARKSALFRQMRADKRASRALAAAMQPLVLAPPTCARIPYVCPLSSSVEESVSRRSLERCSKRVPREHASPRVASEMQPFADRPRLFSRVLLLPLSEITRAFFSRVFVPGSAMYDCATDLAHVVLDWWSITPMAHYLAMLDNFLGTPTEESVRQASTNLLEEVEAMRALCRDHRANGVFAWVTETAGTIGSTLKTAAVAPFHGAGVALKAVLTPCASATLAWGEKFFQTLKSKFFEFLKPYIQHAIYASAEIEKYWAFIHGWATKMWNNVGVELQALGDAAWWAIGITMVCGIVTLVEKLLVYLGALNAGGILCSLMLTGLLGAAGLLATGKFAEASSTLVGAMRSLIFTLFGSWKPTEASDGLTCNANALDFPLKVLETVGTGLISAPLGTLQYIGKYGQAMDQIRKGKDAIKEFVGFCMDRVADAWDYMTGRKDSFLREIASAAKVDIVYWIKQTQSVLLQAQTIAVTDIVLLDTVTHLLYKGQILQLTLAKASRTTSLDYARIVSTLIGELTKIRATCARAGSFDGRRPEPFWCYIYGKSHCGKSLFMEDVSRALLKENGHAPNDIYAKNARDSFWSGYLQHACVQVDDLSACVTRPSLESEFLQLVGSKMYSLNMAAVEDKGMSFNSSIIVTTANVYTAPTSAEITDKDAYGNRRNVVVQCRAAPDVEFDPRNPSASCEARLVHRTDESPLGNGQWRNCSAVLEDIIHHAAIHRNKENLLMENYRERSDTQHPVFVGAKSFIHRLAKEKNFAHIVCDDVLYYHDSYIDSTRVSEGTINIGMEDACIQSVVQWSELVGGVKDLGLLYAFVHAFTEGPCHVDSVEALNSEATSCQRDFFQSLSLLERIYMRLVQKQLDRIRANPDFLFSVDIKTRILQSFRHGYDEMITHGGKVLAIFAALLLVLLLYSSFFALYQTFVAGTSSALVSAGMITQLSANAGSVCTSASNPSGAASYVSSNIPIHHRWRSNYSERSYALNSNLEDKYLLDLLVWLQIPGDSIISCIRFKGRSLLLTKHQALAIPEGARVYCNYYGRGRAVQTIPLSWSYKKVREFADTEAVLFLDAQLSTMPAGREHYFNVPVERLPSVFDMNGVVMKQKRYMTDSDDSLAAFTPNQPVVNTWENSRAKLNCERQGINTFAYGGNYRNELPRSISSNCNTSPEDCGAIMTMIFEGRRVVVGMHVASGKNPQGRYMSTACLLPDYHEDLSLNSMLQYTPYDGICKEGYRQIGNIENIGARPYTSGKTAFVAVPQHLLYSPPVLQEKLPGSAQPVTIQVEVKQPAILSKDDPRIPEGTSYDPLIDGMAKFSHPMAVLDENVCNEVAQDIVESWHDCFQDLQDVSDEIAINGSTEMDYEPFNLQSSEGYPYVTQRKPGESGKIRFFEMDPYTGLKSLIPNTLPAMRYEALQRDCFTSVPEMVCIETPKDECLPLRKICIKPKTRLFSILPLEFNLLLRKKFLHFSSSLQMHRDTLPTQVGVNPYSREWGELLQRLRAQSSVAINCDYASFDGLLTGQILEKIGTMINKMYIGSEASKIQRLNLLMSIVNRKSICGARVYEVRAGIPSGCALTVLLNSIFNEFLIRFVWRTTIIGVPRERFSQYVTLLIYGDDNLIAVHPDYLPHFNGEIIRTRLADVNVIITDGSDKTAEKIEEKPLVQLDFLKRRFRKLNDGTVYAPLDLASVYTSLQNVTMGAGSIHIALQNNVHNALLELYLHGNETWFNHLRDFYRKSHAWVNLPSWREAFAFHQGQISGVTPWTPYQMFDVPVDGGRLRAMMANQGEAAFSTHLGREIYICGPKWCVSDPEHQFVVSTTPLRSADRGSGIHRAIEYPCNGVGRLPSQDWVTKFKSSAHRVTAEIRKAHASGKAIYFRDDPPYVANWCAAIGFAQGLGYDYKSMINLYHDVSVPGSDALYFYFEQRARRALPEPYIPPHLRTRVR.

Over 524–1053 (CNANALDFPL…YDEMITHGGK (530 aa)) the chain is Cytoplasmic. The SF3 helicase domain maps to 672-838 (LTKIRATCAR…VEFDPRNPSA (167 aa)). 699–706 (GKSHCGKS) is a binding site for ATP. The helical transmembrane segment at 1054-1074 (VLAIFAALLLVLLLYSSFFAL) threads the bilayer. The Lumenal portion of the chain corresponds to 1075–1105 (YQTFVAGTSSALVSAGMITQLSANAGSVCTS). The N-linked (GlcNAc...) asparagine; by host glycan is linked to Asn1129. Positions 1136 to 1366 (ALNSNLEDKY…CLLPDYHEDL (231 aa)) constitute a Peptidase C3 domain. Residues His1176, Glu1217, and Cys1323 each act as for picornain 3C-like protease activity in the active site. The RdRp catalytic domain maps to 1655–1780 (SVAINCDYAS…AVHPDYLPHF (126 aa)).

The protein belongs to the nepoviruses RNA1 polyprotein family. In terms of processing, specific enzymatic cleavages by picornain 3C-like protease in vivo yield mature proteins. Picornain 3C-like protease is autocatalytically processed. NTB exists as NTB-VPg polyprotein as well as NTB mature protein. VPg is uridylylated by the polymerase and is covalently linked to the 5'-end of genomic RNA. This uridylylated form acts as a nucleotide-peptide primer for the polymerase.

Its subcellular location is the host endoplasmic reticulum lumen. The protein localises to the host endoplasmic reticulum membrane. The catalysed reaction is RNA(n) + a ribonucleoside 5'-triphosphate = RNA(n+1) + diphosphate. Its function is as follows. Picornain 3C-like protease is a thiol protease that cleaves at Gln-|-Gly or Gln-|-Ser sites in the P1 and P2 polyproteins. The VPg-NTB polyprotein may act as a membrane-anchor for the replication complex. In Blackcurrant reversion association virus (BRAV), this protein is RNA1 polyprotein.